A 579-amino-acid polypeptide reads, in one-letter code: Probable serine/threonine-protein kinase kinY (579 aa).

The segment at 1–24 (MINGEQTMVEDELPDQGKPMSDES) is disordered. Residues 32 to 309 (LKVGESIGSG…HVLKQLTSLF (278 aa)) enclose the Protein kinase domain. Residues 38–46 (IGSGAYGIV) and Lys-59 each bind ATP. Residue Asp-167 is the Proton acceptor of the active site.

Belongs to the protein kinase superfamily. TKL Ser/Thr protein kinase family.

It catalyses the reaction L-seryl-[protein] + ATP = O-phospho-L-seryl-[protein] + ADP + H(+). It carries out the reaction L-threonyl-[protein] + ATP = O-phospho-L-threonyl-[protein] + ADP + H(+). The sequence is that of Probable serine/threonine-protein kinase kinY (kinY) from Dictyostelium discoideum (Social amoeba).